A 475-amino-acid polypeptide reads, in one-letter code: Siroheme synthase (475 aa).

Residues 1 to 204 are precorrin-2 dehydrogenase /sirohydrochlorin ferrochelatase; sequence MDYLPVFLNI…GRDQAAQDYL (204 aa). NAD(+) contacts are provided by residues 22-23 and 43-44; these read EI and PA. Residue S129 is modified to Phosphoserine. Residues 218-475 are uroporphyrinogen-III C-methyltransferase; it reads GEVYLVGAGP…MGTSSGPGYP (258 aa). Residue P227 participates in S-adenosyl-L-methionine binding. D250 serves as the catalytic Proton acceptor. Residue K272 is the Proton donor of the active site. S-adenosyl-L-methionine-binding positions include 303 to 305, I308, 333 to 334, M385, and G414; these read GGD and TA.

The protein in the N-terminal section; belongs to the precorrin-2 dehydrogenase / sirohydrochlorin ferrochelatase family. It in the C-terminal section; belongs to the precorrin methyltransferase family.

It carries out the reaction uroporphyrinogen III + 2 S-adenosyl-L-methionine = precorrin-2 + 2 S-adenosyl-L-homocysteine + H(+). It catalyses the reaction precorrin-2 + NAD(+) = sirohydrochlorin + NADH + 2 H(+). The enzyme catalyses siroheme + 2 H(+) = sirohydrochlorin + Fe(2+). The protein operates within cofactor biosynthesis; adenosylcobalamin biosynthesis; precorrin-2 from uroporphyrinogen III: step 1/1. It participates in cofactor biosynthesis; adenosylcobalamin biosynthesis; sirohydrochlorin from precorrin-2: step 1/1. It functions in the pathway porphyrin-containing compound metabolism; siroheme biosynthesis; precorrin-2 from uroporphyrinogen III: step 1/1. Its pathway is porphyrin-containing compound metabolism; siroheme biosynthesis; siroheme from sirohydrochlorin: step 1/1. The protein operates within porphyrin-containing compound metabolism; siroheme biosynthesis; sirohydrochlorin from precorrin-2: step 1/1. Functionally, multifunctional enzyme that catalyzes the SAM-dependent methylations of uroporphyrinogen III at position C-2 and C-7 to form precorrin-2 via precorrin-1. Then it catalyzes the NAD-dependent ring dehydrogenation of precorrin-2 to yield sirohydrochlorin. Finally, it catalyzes the ferrochelation of sirohydrochlorin to yield siroheme. The chain is Siroheme synthase from Nitrosomonas europaea (strain ATCC 19718 / CIP 103999 / KCTC 2705 / NBRC 14298).